Consider the following 429-residue polypeptide: Histidine--tRNA ligase (429 aa).

Belongs to the class-II aminoacyl-tRNA synthetase family. In terms of assembly, homodimer.

The protein localises to the cytoplasm. It catalyses the reaction tRNA(His) + L-histidine + ATP = L-histidyl-tRNA(His) + AMP + diphosphate + H(+). The chain is Histidine--tRNA ligase from Dechloromonas aromatica (strain RCB).